The chain runs to 131 residues: Metalloproteinase inhibitor (131 aa).

The first 29 residues, 1–29 (MVRKRALGLAGSALTLVLGAVGFTAPAQA), serve as a signal peptide directing secretion. Intrachain disulfides connect cysteine 33–cysteine 39 and cysteine 93–cysteine 98.

In terms of biological role, inhibits microbial metallo-proteinases, such as thermolysin, but not serine, thiol, or carboxyl proteinases. The chain is Metalloproteinase inhibitor (smpI) from Streptomyces nigrescens.